An 85-amino-acid chain; its full sequence is Translation initiation factor IF-1 (85 aa).

One can recognise an S1-like domain in the interval 1–72 (MAKEELIEMH…SKGRITFRHI (72 aa)).

Belongs to the IF-1 family. Component of the 30S ribosomal translation pre-initiation complex which assembles on the 30S ribosome in the order IF-2 and IF-3, IF-1 and N-formylmethionyl-tRNA(fMet); mRNA recruitment can occur at any time during PIC assembly.

It is found in the cytoplasm. Functionally, one of the essential components for the initiation of protein synthesis. Stabilizes the binding of IF-2 and IF-3 on the 30S subunit to which N-formylmethionyl-tRNA(fMet) subsequently binds. Helps modulate mRNA selection, yielding the 30S pre-initiation complex (PIC). Upon addition of the 50S ribosomal subunit IF-1, IF-2 and IF-3 are released leaving the mature 70S translation initiation complex. The chain is Translation initiation factor IF-1 from Polaromonas naphthalenivorans (strain CJ2).